The following is a 29-amino-acid chain: Cyclotide mela-3 (29 aa).

Positions 1–29 (GKPICGETCFKGKCYTPGCTCSYPICKKD) form a cross-link, cyclopeptide (Gly-Asp). 3 disulfides stabilise this stretch: cysteine 5–cysteine 19, cysteine 9–cysteine 21, and cysteine 14–cysteine 26.

This is a cyclic peptide. In terms of processing, contains 3 disulfide bonds.

Its function is as follows. Probably participates in a plant defense mechanism (Potential). Binds to and induces leakage in phospholipd membranes, particularly ones containing 1-palmitoyl-2-oleophosphatidylethanolamine (POPE). In vitro, displays cytotoxicity against cultured cells. Not active against Gram-negative bacterium E.coli ATCC 25922 or Gram-positive bacterium S.aureus ATCC 25923 up to a concentration of 64 uM. This chain is Cyclotide mela-3, found in Melicytus latifolius (Norfolk Island mahoe).